Reading from the N-terminus, the 144-residue chain is Large ribosomal subunit protein uL16 (144 aa).

The span at M1 to A17 shows a compositional bias: basic residues. Positions M1–Q22 are disordered.

This sequence belongs to the universal ribosomal protein uL16 family. As to quaternary structure, part of the 50S ribosomal subunit.

Functionally, binds 23S rRNA and is also seen to make contacts with the A and possibly P site tRNAs. The protein is Large ribosomal subunit protein uL16 of Bacteroides fragilis (strain ATCC 25285 / DSM 2151 / CCUG 4856 / JCM 11019 / LMG 10263 / NCTC 9343 / Onslow / VPI 2553 / EN-2).